The following is a 343-amino-acid chain: N-acetyl-gamma-glutamyl-phosphate reductase (343 aa).

The active site involves C147.

It belongs to the NAGSA dehydrogenase family. Type 1 subfamily.

Its subcellular location is the cytoplasm. It carries out the reaction N-acetyl-L-glutamate 5-semialdehyde + phosphate + NADP(+) = N-acetyl-L-glutamyl 5-phosphate + NADPH + H(+). It participates in amino-acid biosynthesis; L-arginine biosynthesis; N(2)-acetyl-L-ornithine from L-glutamate: step 3/4. In terms of biological role, catalyzes the NADPH-dependent reduction of N-acetyl-5-glutamyl phosphate to yield N-acetyl-L-glutamate 5-semialdehyde. The chain is N-acetyl-gamma-glutamyl-phosphate reductase from Listeria monocytogenes serotype 4a (strain HCC23).